Here is a 71-residue protein sequence, read N- to C-terminus: uncharacterized protein (71 aa).

The N-terminal stretch at Met1 to Thr21 is a signal peptide.

This is an uncharacterized protein from Haemophilus influenzae (strain ATCC 51907 / DSM 11121 / KW20 / Rd).